The following is a 459-amino-acid chain: Cysteine--tRNA ligase (459 aa).

A Zn(2+)-binding site is contributed by cysteine 31. Residues 33–43 carry the 'HIGH' region motif; sequence PTVYYNPHIGN. The Zn(2+) site is built by cysteine 216, histidine 241, and glutamate 245. Residues 274–278 carry the 'KMSKS' region motif; sequence KMSKS. ATP is bound at residue lysine 277.

The protein belongs to the class-I aminoacyl-tRNA synthetase family. Monomer. Zn(2+) serves as cofactor.

The protein localises to the cytoplasm. It catalyses the reaction tRNA(Cys) + L-cysteine + ATP = L-cysteinyl-tRNA(Cys) + AMP + diphosphate. The polypeptide is Cysteine--tRNA ligase (Rickettsia rickettsii (strain Iowa)).